Here is a 216-residue protein sequence, read N- to C-terminus: Probable GTP-binding protein EngB (216 aa).

An EngB-type G domain is found at 27-201; that stretch reads EGIEVAFAGR…REKLDTWFSE (175 aa). GTP is bound by residues 35 to 42, 62 to 66, 80 to 83, 147 to 150, and 180 to 182; these read GRSNAGKS, GRTQL, DLPG, TKAD, and FSS. Residues S42 and T64 each contribute to the Mg(2+) site.

The protein belongs to the TRAFAC class TrmE-Era-EngA-EngB-Septin-like GTPase superfamily. EngB GTPase family. It depends on Mg(2+) as a cofactor.

Functionally, necessary for normal cell division and for the maintenance of normal septation. The sequence is that of Probable GTP-binding protein EngB from Yersinia pestis bv. Antiqua (strain Angola).